The primary structure comprises 415 residues: tRNA (cytosine(38)-C(5))-methyltransferase (415 aa).

The SAM-dependent MTase C5-type domain occupies leucine 4–alanine 396. Residues isoleucine 13 to glycine 15, aspartate 34, isoleucine 57 to glutamate 58, and serine 76 each bind S-adenosyl-L-methionine. The active site involves cysteine 79. Serine 376 lines the S-adenosyl-L-methionine pocket.

Belongs to the class I-like SAM-binding methyltransferase superfamily. C5-methyltransferase family. Highly expressed in thymus, testis, and at much lower levels in spleen, lung, brain, heart, kidney, liver, skeletal muscle and embryonic stem cells.

The protein localises to the cytoplasm. It carries out the reaction cytidine(38) in tRNA + S-adenosyl-L-methionine = 5-methylcytidine(38) in tRNA + S-adenosyl-L-homocysteine + H(+). Specifically methylates cytosine 38 in the anticodon loop of tRNA(Asp). Has higher activity on tRNA(Asp) modified with queuosine at position 34. The chain is tRNA (cytosine(38)-C(5))-methyltransferase (Trdmt1) from Mus musculus (Mouse).